A 311-amino-acid polypeptide reads, in one-letter code: Aspartate carbamoyltransferase catalytic subunit (311 aa).

The carbamoyl phosphate site is built by R52 and T53. K80 contacts L-aspartate. Carbamoyl phosphate-binding residues include R102, H131, and Q134. Residues R164 and R216 each coordinate L-aspartate. 2 residues coordinate carbamoyl phosphate: A259 and P260.

It belongs to the aspartate/ornithine carbamoyltransferase superfamily. ATCase family. As to quaternary structure, heterododecamer (2C3:3R2) of six catalytic PyrB chains organized as two trimers (C3), and six regulatory PyrI chains organized as three dimers (R2).

It carries out the reaction carbamoyl phosphate + L-aspartate = N-carbamoyl-L-aspartate + phosphate + H(+). Its pathway is pyrimidine metabolism; UMP biosynthesis via de novo pathway; (S)-dihydroorotate from bicarbonate: step 2/3. In terms of biological role, catalyzes the condensation of carbamoyl phosphate and aspartate to form carbamoyl aspartate and inorganic phosphate, the committed step in the de novo pyrimidine nucleotide biosynthesis pathway. The sequence is that of Aspartate carbamoyltransferase catalytic subunit from Lactiplantibacillus plantarum (strain ATCC BAA-793 / NCIMB 8826 / WCFS1) (Lactobacillus plantarum).